The sequence spans 261 residues: Glutamate racemase (261 aa).

Residues 9–10 (DS) and 41–42 (YG) contribute to the substrate site. Catalysis depends on Cys73, which acts as the Proton donor/acceptor. Residue 74–75 (NT) participates in substrate binding. Cys179 acts as the Proton donor/acceptor in catalysis. 180-181 (TH) provides a ligand contact to substrate.

This sequence belongs to the aspartate/glutamate racemases family.

It catalyses the reaction L-glutamate = D-glutamate. Its pathway is cell wall biogenesis; peptidoglycan biosynthesis. In terms of biological role, provides the (R)-glutamate required for cell wall biosynthesis. This chain is Glutamate racemase, found in Aliivibrio fischeri (strain MJ11) (Vibrio fischeri).